Here is a 209-residue protein sequence, read N- to C-terminus: Large ribosomal subunit protein uL3 (209 aa).

The disordered stretch occupies residues 133–152; the sequence is THGNSLSHRVPGSIGQNQTP. At Q150 the chain carries N5-methylglutamine.

This sequence belongs to the universal ribosomal protein uL3 family. As to quaternary structure, part of the 50S ribosomal subunit. Forms a cluster with proteins L14 and L19. In terms of processing, methylated by PrmB.

Functionally, one of the primary rRNA binding proteins, it binds directly near the 3'-end of the 23S rRNA, where it nucleates assembly of the 50S subunit. The polypeptide is Large ribosomal subunit protein uL3 (Yersinia pseudotuberculosis serotype O:1b (strain IP 31758)).